Reading from the N-terminus, the 661-residue chain is UvrABC system protein B (661 aa).

A Helicase ATP-binding domain is found at 31 to 186 (DNIEGGEKAQ…LLNALVDIQF (156 aa)). 44–51 (GATGTGKT) is an ATP binding site. The short motif at 97–120 (YYDYYQPEAYVPSSDTYIEKDSSV) is the Beta-hairpin element. One can recognise a Helicase C-terminal domain in the interval 435 to 601 (QMDDLLGEIN…TIKKEIRDLI (167 aa)). A UVR domain is found at 626 to 661 (KAMIKKLEGQMQEAAEVLDFELAAQIRDMVIELKNM).

The protein belongs to the UvrB family. Forms a heterotetramer with UvrA during the search for lesions. Interacts with UvrC in an incision complex.

It localises to the cytoplasm. The UvrABC repair system catalyzes the recognition and processing of DNA lesions. A damage recognition complex composed of 2 UvrA and 2 UvrB subunits scans DNA for abnormalities. Upon binding of the UvrA(2)B(2) complex to a putative damaged site, the DNA wraps around one UvrB monomer. DNA wrap is dependent on ATP binding by UvrB and probably causes local melting of the DNA helix, facilitating insertion of UvrB beta-hairpin between the DNA strands. Then UvrB probes one DNA strand for the presence of a lesion. If a lesion is found the UvrA subunits dissociate and the UvrB-DNA preincision complex is formed. This complex is subsequently bound by UvrC and the second UvrB is released. If no lesion is found, the DNA wraps around the other UvrB subunit that will check the other stand for damage. The chain is UvrABC system protein B from Streptococcus suis (strain 98HAH33).